Here is a 460-residue protein sequence, read N- to C-terminus: Acetyl-CoA decarbonylase/synthase complex subunit beta (460 aa).

Residues cysteine 188, cysteine 191, cysteine 277, and cysteine 279 each coordinate [Ni-Fe-S] cluster. Over residues 402-416 the composition is skewed to acidic residues; that stretch reads EETEPEEEEVEEAYP. The segment at 402-422 is disordered; that stretch reads EETEPEEEEVEEAYPEETPIP.

The protein belongs to the CdhC family. As to quaternary structure, monomer. The ACDS complex is made up of alpha, epsilon, beta, gamma and delta chains with a probable stoichiometry of (alpha(2)epsilon(2))(4)-beta(8)-(gamma(1)delta(1))(8). [Ni-Fe-S] cluster is required as a cofactor.

It catalyses the reaction Co(I)-[corrinoid Fe-S protein] + acetyl-CoA + H(+) = methyl-Co(III)-[corrinoid Fe-S protein] + CO + CoA. Functionally, part of a complex that catalyzes the reversible cleavage of acetyl-CoA, allowing autotrophic growth from CO(2). The alpha-epsilon complex generates CO from CO(2), while the beta subunit (this protein) combines the CO with CoA and a methyl group to form acetyl-CoA. The methyl group, which is incorporated into acetyl-CoA, is transferred to the beta subunit by a corrinoid iron-sulfur protein (the gamma-delta complex). This is Acetyl-CoA decarbonylase/synthase complex subunit beta from Methanothermobacter thermautotrophicus (strain ATCC 29096 / DSM 1053 / JCM 10044 / NBRC 100330 / Delta H) (Methanobacterium thermoautotrophicum).